Here is a 524-residue protein sequence, read N- to C-terminus: 56 kDa type-specific antigen (524 aa).

Residues 1–22 (MKKIMLIASAMSALSLPFSASA) form the signal peptide. A helical transmembrane segment spans residues 67–87 (LTTGLPFGGTLAAGMTIAPGF). Disordered regions lie at residues 112 to 132 (SKGE…RKRF) and 387 to 422 (EKLA…KGKE). 2 stretches are compositionally biased toward basic and acidic residues: residues 395–405 (EDAKNQGEGDC) and 413–422 (EKSKEGKGKE). The chain crosses the membrane as a helical span at residues 472–492 (TGMVASGALGVAINAAEGVYV).

The protein localises to the cell membrane. In terms of biological role, may be an adherent factor for rickettsial adsorption to the host-cell surface and a determinant of virulence of individual rickettsial strain. It is the major outer membrane protein. This is 56 kDa type-specific antigen from Orientia tsutsugamushi (Rickettsia tsutsugamushi).